Reading from the N-terminus, the 260-residue chain is Resolvase (260 aa).

One can recognise a Tyr recombinase domain in the interval 38–241; it reads ELPKYLLAPE…FALDVAARHR (204 aa). Active-site residues include Arg73, Lys105, His193, Arg196, and His219. Residue Tyr228 is the O-(3'-phospho-DNA)-tyrosine intermediate of the active site.

The protein belongs to the 'phage' integrase family.

In terms of biological role, this resolvase acts at the RfsF equivalent resolution sequence of pColBM-CL139. This Escherichia coli protein is Resolvase (resD).